Reading from the N-terminus, the 189-residue chain is UPF0200 protein Smar_1234 (189 aa).

10–17 (GMPGAGKS) contributes to the ATP binding site.

The protein belongs to the UPF0200 family.

The chain is UPF0200 protein Smar_1234 from Staphylothermus marinus (strain ATCC 43588 / DSM 3639 / JCM 9404 / F1).